The primary structure comprises 291 residues: 33 kDa chaperonin (291 aa).

Intrachain disulfides connect Cys235–Cys237 and Cys268–Cys271.

Belongs to the HSP33 family. Under oxidizing conditions two disulfide bonds are formed involving the reactive cysteines. Under reducing conditions zinc is bound to the reactive cysteines and the protein is inactive.

It is found in the cytoplasm. Functionally, redox regulated molecular chaperone. Protects both thermally unfolding and oxidatively damaged proteins from irreversible aggregation. Plays an important role in the bacterial defense system toward oxidative stress. The polypeptide is 33 kDa chaperonin (Bacillus subtilis (strain 168)).